A 160-amino-acid polypeptide reads, in one-letter code: Cytochrome b6-f complex subunit 4 (160 aa).

3 consecutive transmembrane segments (helical) span residues 36 to 56 (LLYI…GLAV), 95 to 115 (LLGV…PFLE), and 131 to 151 (TVFL…TLPI).

The protein belongs to the cytochrome b family. PetD subfamily. As to quaternary structure, the 4 large subunits of the cytochrome b6-f complex are cytochrome b6, subunit IV (17 kDa polypeptide, petD), cytochrome f and the Rieske protein, while the 4 small subunits are petG, petL, petM and petN. The complex functions as a dimer.

It localises to the plastid. The protein resides in the chloroplast thylakoid membrane. Its function is as follows. Component of the cytochrome b6-f complex, which mediates electron transfer between photosystem II (PSII) and photosystem I (PSI), cyclic electron flow around PSI, and state transitions. The protein is Cytochrome b6-f complex subunit 4 of Oryza nivara (Indian wild rice).